Consider the following 345-residue polypeptide: MSTPTPLSYKDAGVDIDAGNALVSNIKAAVKRTRRPEVMGNLGGFGALCEIPTKYKQPVLVSGTDGVGTKLRLAIDYKKHDTVGIDLVAMCVNDLIVQGAEPLFFLDYYATGKLDVETATSVVNGIGEGCFQSGCALIGGETAEMPGMYEGEDYDLAGFCVGVVEKADIIDGSKVAAGDALIALASSGPHSNGYSLVRKVLEVSQADPQQDLNGKPLIEHLLEPTKIYVKSLLKLIEASDVHAMAHITGGGFWENIPRVLPDNCKAVIQGDSWQWPAVFSWLMENGNIAQYEMYRTFNCGVGMIVALPADKVDAALALLAAEGEQAWLIGAIAHREGNEEQVEIL.

Belongs to the AIR synthase family.

Its subcellular location is the cytoplasm. The enzyme catalyses 2-formamido-N(1)-(5-O-phospho-beta-D-ribosyl)acetamidine + ATP = 5-amino-1-(5-phospho-beta-D-ribosyl)imidazole + ADP + phosphate + H(+). The protein operates within purine metabolism; IMP biosynthesis via de novo pathway; 5-amino-1-(5-phospho-D-ribosyl)imidazole from N(2)-formyl-N(1)-(5-phospho-D-ribosyl)glycinamide: step 2/2. This chain is Phosphoribosylformylglycinamidine cyclo-ligase, found in Shewanella putrefaciens (strain CN-32 / ATCC BAA-453).